A 357-amino-acid chain; its full sequence is Isopentenyl-diphosphate delta-isomerase (357 aa).

6 to 7 (RK) provides a ligand contact to substrate. FMN is bound by residues Ser62, 63-65 (AMT), Ser93, and Asn122. Substrate is bound at residue 93 to 95 (SQR). Position 156 (Gln156) interacts with substrate. A Mg(2+)-binding site is contributed by Glu157. Residues Lys186, Thr216, 267 to 269 (GVR), and 288 to 289 (AL) contribute to the FMN site.

It belongs to the IPP isomerase type 2 family. Homooctamer. Dimer of tetramers. FMN serves as cofactor. Requires NADPH as cofactor. It depends on Mg(2+) as a cofactor.

It is found in the cytoplasm. The catalysed reaction is isopentenyl diphosphate = dimethylallyl diphosphate. Its function is as follows. Involved in the biosynthesis of isoprenoids. Catalyzes the 1,3-allylic rearrangement of the homoallylic substrate isopentenyl (IPP) to its allylic isomer, dimethylallyl diphosphate (DMAPP). This is Isopentenyl-diphosphate delta-isomerase from Methanothrix thermoacetophila (strain DSM 6194 / JCM 14653 / NBRC 101360 / PT) (Methanosaeta thermophila).